Reading from the N-terminus, the 536-residue chain is Cytochrome P450 monooxygenase fscF (536 aa).

A helical transmembrane segment spans residues 9–29 (VSWLCALFTAIALYCIAVAFY). Cysteine 464 provides a ligand contact to heme.

This sequence belongs to the cytochrome P450 family. The cofactor is heme.

The protein resides in the membrane. The protein operates within secondary metabolite biosynthesis. Cytochrome P450 monooxygenase; part of the fragmented gene cluster that mediates the biosynthesis of fusarochromene, a tryptophan-derived metabolite closely related to a group of mycotoxins including fusarochromanone. Within the pathway, fscF catalyzes the epoxidation of desacetylfusarochromene which opens the way to the production of fusarochromanones. The first step of the pathway is the epimerization of L-tryptophan to D-tryptophan in the presence of the NRPS-like tryptophan epimerase fscC. D-tryptophan is subsequently hydroxylated by the tryptophan 6-hydroxylase fscE to yield 6-hydroxytryptophan. The pyrrole ring undergoes cleavaged by the tryptophan 2,3-dioxygenase fscD and is finally converted to 4-hydroxykyrunenine by the hydrolase fscH. The NRPS-like oxidoreductase fscA reduces the carboxyl group to primary alcohol and the DMATS-type prenyltransferase fscG performs prenylation, followed by the formation of a chromene ring catalyzed by the oxidoreductase fscI, which leads to desacetylfusarochromene. Epoxidation by fscF and rearrangement reactions of chromene double bonds convert compound desacetylfusarochromene to fusarochromanones. Although specific acetyltransferases were not found near the fsc gene cluster, several predicted enzymes containing the N-acetyltransferase superfamily domain are present in the genome of F.equiseti. These predicted enzymes may have the potential to convert desacetylfusarochromene to fusarochromene. This is Cytochrome P450 monooxygenase fscF from Fusarium equiseti (Fusarium scirpi).